Reading from the N-terminus, the 329-residue chain is MKNIHVLLLCGGGGSEHEVSLRSANFLEKQLSLLPGVEVTRVEMFADRWLSADGRECKLGLDKLLSFDSVARPVDYVVPCIHGYPGETGDLQSFLELAGLPYLGCDAEASKICFNKISTKLWLSAIGIPNTPYLFLTEQNDAALSEAKAALAKWGKVFIKAASQGSSVGCYSASNEADLVKGIADAFGYSEQVLIEKAVKPRELEVAVYQYGDELVATYPGEICVPQDKFYTYEEKYSSASHTETALRAEGLTQAQADAIHEYALKAFRQLKLTHLSRIDFFLTEEGEILLNEINTFPGMTSISMFPKLLEHHGHRFADYLEQILRKAV.

The 207-residue stretch at 120–326 (KLWLSAIGIP…FADYLEQILR (207 aa)) folds into the ATP-grasp domain. Position 150-205 (150-205 (ALAKWGKVFIKAASQGSSVGCYSASNEADLVKGIADAFGYSEQVLIEKAVKPRELE)) interacts with ATP. 3 residues coordinate Mg(2+): aspartate 280, glutamate 293, and asparagine 295.

The protein belongs to the D-alanine--D-alanine ligase family. Requires Mg(2+) as cofactor. Mn(2+) serves as cofactor.

The protein localises to the cytoplasm. It carries out the reaction 2 D-alanine + ATP = D-alanyl-D-alanine + ADP + phosphate + H(+). Its pathway is cell wall biogenesis; peptidoglycan biosynthesis. In terms of biological role, cell wall formation. In Aeromonas hydrophila subsp. hydrophila (strain ATCC 7966 / DSM 30187 / BCRC 13018 / CCUG 14551 / JCM 1027 / KCTC 2358 / NCIMB 9240 / NCTC 8049), this protein is D-alanine--D-alanine ligase.